Consider the following 332-residue polypeptide: L-lactate dehydrogenase A chain (332 aa).

NAD(+) contacts are provided by residues 29-57 (GAVG…MEDK) and Arg-99. Residues Arg-106, Asn-138, and Arg-169 each coordinate substrate. Asn-138 is a binding site for NAD(+). Residue His-193 is the Proton acceptor of the active site. Thr-248 contacts substrate.

This sequence belongs to the LDH/MDH superfamily. LDH family. As to quaternary structure, homotetramer.

Its subcellular location is the cytoplasm. The enzyme catalyses (S)-lactate + NAD(+) = pyruvate + NADH + H(+). It participates in fermentation; pyruvate fermentation to lactate; (S)-lactate from pyruvate: step 1/1. Functionally, interconverts simultaneously and stereospecifically pyruvate and lactate with concomitant interconversion of NADH and NAD(+). The chain is L-lactate dehydrogenase A chain (LDHA) from Sceloporus undulatus (Eastern fence lizard).